The sequence spans 122 residues: Basic phospholipase A2 LmTX-II (122 aa).

Disulfide bonds link Cys26–Cys115, Cys28–Cys44, Cys43–Cys95, Cys49–Cys122, Cys50–Cys88, and Cys75–Cys86. Ca(2+) contacts are provided by Tyr27, Gly29, and Gly31. His47 is a catalytic residue. Ca(2+) is bound at residue Asp48. Residue Asp89 is part of the active site.

As to quaternary structure, monomer. The cofactor is Ca(2+). In terms of tissue distribution, expressed by the venom gland.

Its subcellular location is the secreted. It carries out the reaction a 1,2-diacyl-sn-glycero-3-phosphocholine + H2O = a 1-acyl-sn-glycero-3-phosphocholine + a fatty acid + H(+). Snake venom phospholipase A2 (PLA2) that may display neurotoxic and myotoxic activities. May induce inflammatory edema by mechanisms involving mast cell activation and arachidonic acid metabolites. May increase plasma creatine kinase activity. PLA2 catalyzes the calcium-dependent hydrolysis of the 2-acyl groups in 3-sn-phosphoglycerides. This chain is Basic phospholipase A2 LmTX-II, found in Lachesis muta muta (Bushmaster).